We begin with the raw amino-acid sequence, 682 residues long: Methionine--tRNA ligase (682 aa).

The 'HIGH' region motif lies at proline 15–histidine 25. The Zn(2+) site is built by cysteine 146, cysteine 149, cysteine 159, and cysteine 162. Residues lysine 331–serine 335 carry the 'KMSKS' region motif. Lysine 334 provides a ligand contact to ATP. A tRNA-binding domain is found at aspartate 580–lysine 682.

Belongs to the class-I aminoacyl-tRNA synthetase family. MetG type 1 subfamily. Homodimer. Requires Zn(2+) as cofactor.

The protein localises to the cytoplasm. The catalysed reaction is tRNA(Met) + L-methionine + ATP = L-methionyl-tRNA(Met) + AMP + diphosphate. Is required not only for elongation of protein synthesis but also for the initiation of all mRNA translation through initiator tRNA(fMet) aminoacylation. This is Methionine--tRNA ligase from Pasteurella multocida (strain Pm70).